Here is a 288-residue protein sequence, read N- to C-terminus: Formamidopyrimidine-DNA glycosylase (288 aa).

The active-site Schiff-base intermediate with DNA is proline 2. The active-site Proton donor is the glutamate 3. Catalysis depends on lysine 59, which acts as the Proton donor; for beta-elimination activity. Residues histidine 93, arginine 112, and lysine 168 each contribute to the DNA site. The FPG-type zinc finger occupies asparagine 254 to arginine 288. The active-site Proton donor; for delta-elimination activity is the arginine 278.

It belongs to the FPG family. Monomer. Zn(2+) is required as a cofactor.

It catalyses the reaction Hydrolysis of DNA containing ring-opened 7-methylguanine residues, releasing 2,6-diamino-4-hydroxy-5-(N-methyl)formamidopyrimidine.. The catalysed reaction is 2'-deoxyribonucleotide-(2'-deoxyribose 5'-phosphate)-2'-deoxyribonucleotide-DNA = a 3'-end 2'-deoxyribonucleotide-(2,3-dehydro-2,3-deoxyribose 5'-phosphate)-DNA + a 5'-end 5'-phospho-2'-deoxyribonucleoside-DNA + H(+). Involved in base excision repair of DNA damaged by oxidation or by mutagenic agents. Acts as a DNA glycosylase that recognizes and removes damaged bases. Has a preference for oxidized purines, such as 7,8-dihydro-8-oxoguanine (8-oxoG). Has AP (apurinic/apyrimidinic) lyase activity and introduces nicks in the DNA strand. Cleaves the DNA backbone by beta-delta elimination to generate a single-strand break at the site of the removed base with both 3'- and 5'-phosphates. This is Formamidopyrimidine-DNA glycosylase from Corynebacterium jeikeium (strain K411).